Reading from the N-terminus, the 227-residue chain is UPF0758 protein LPC_1989 (227 aa).

An MPN domain is found at 102–225 (QLSNTQQTYA…YSIFAENKWV (124 aa)). Residues H173, H175, and D186 each coordinate Zn(2+). Residues 173–186 (HNHPSGLSDASQQD) carry the JAMM motif motif.

The protein belongs to the UPF0758 family.

In Legionella pneumophila (strain Corby), this protein is UPF0758 protein LPC_1989.